Here is a 312-residue protein sequence, read N- to C-terminus: HPr kinase/phosphorylase (312 aa).

Residues His-139 and Lys-160 contribute to the active site. ATP is bound at residue 154–161; the sequence is GSSGVGKS. Mg(2+) is bound at residue Ser-161. Residue Asp-178 is the Proton acceptor; for phosphorylation activity. Proton donor; for dephosphorylation activity of the active site. The important for the catalytic mechanism of both phosphorylation and dephosphorylation stretch occupies residues 202–211; sequence LEIRGLGIIN. A Mg(2+)-binding site is contributed by Glu-203. Arg-244 is an active-site residue. The segment at 265–270 is important for the catalytic mechanism of dephosphorylation; it reads PVRPGR.

Belongs to the HPrK/P family. Homohexamer. It depends on Mg(2+) as a cofactor.

It catalyses the reaction [HPr protein]-L-serine + ATP = [HPr protein]-O-phospho-L-serine + ADP + H(+). The catalysed reaction is [HPr protein]-O-phospho-L-serine + phosphate + H(+) = [HPr protein]-L-serine + diphosphate. Its function is as follows. Catalyzes the ATP- as well as the pyrophosphate-dependent phosphorylation of a specific serine residue in HPr, a phosphocarrier protein of the phosphoenolpyruvate-dependent sugar phosphotransferase system (PTS). HprK/P also catalyzes the pyrophosphate-producing, inorganic phosphate-dependent dephosphorylation (phosphorolysis) of seryl-phosphorylated HPr (P-Ser-HPr). The two antagonistic activities of HprK/P are regulated by several intracellular metabolites, which change their concentration in response to the absence or presence of rapidly metabolisable carbon sources (glucose, fructose, etc.) in the growth medium. Therefore, by controlling the phosphorylation state of HPr, HPrK/P is a sensor enzyme that plays a major role in the regulation of carbon metabolism and sugar transport: it mediates carbon catabolite repression (CCR), and regulates PTS-catalyzed carbohydrate uptake and inducer exclusion. This is HPr kinase/phosphorylase from Listeria welshimeri serovar 6b (strain ATCC 35897 / DSM 20650 / CCUG 15529 / CIP 8149 / NCTC 11857 / SLCC 5334 / V8).